A 131-amino-acid chain; its full sequence is Sec-independent protein translocase protein TatB (131 aa).

A helical transmembrane segment spans residues 2-22 (LGSLSWEHMLVLVVVGLVVLG). The segment at 96–131 (AFDRPVNGAAAQPPPAPAPPPEPHRPGQTPFDADAT) is disordered. Positions 107–116 (QPPPAPAPPP) are enriched in pro residues.

The protein belongs to the TatB family. In terms of assembly, the Tat system comprises two distinct complexes: a TatABC complex, containing multiple copies of TatA, TatB and TatC subunits, and a separate TatA complex, containing only TatA subunits. Substrates initially bind to the TatABC complex, which probably triggers association of the separate TatA complex to form the active translocon.

It is found in the cell membrane. Its function is as follows. Part of the twin-arginine translocation (Tat) system that transports large folded proteins containing a characteristic twin-arginine motif in their signal peptide across membranes. Together with TatC, TatB is part of a receptor directly interacting with Tat signal peptides. TatB may form an oligomeric binding site that transiently accommodates folded Tat precursor proteins before their translocation. This chain is Sec-independent protein translocase protein TatB, found in Mycobacterium avium (strain 104).